The primary structure comprises 380 residues: Type 4 apparatus protein DotM (380 aa).

The next 2 helical transmembrane spans lie at 18–38 (MAPV…WALA) and 99–119 (YPVI…NVTL).

The T4BSS is a complex nanomachine composed of several subcomplexes. This subunit is part of the Type IV Coupling Complex (T4CC), a subcomplex composed of the DotLMNYZ core and the IcmSW-LvgA adapter subunits, linked by the C-terminal tail of DotL. Six DotLMNYZ hetero-pentameric units may assemble into a hexameric nanomachine, forming an inner membrane channel for effectors to pass through. Interacts directly with DotL.

It is found in the cell inner membrane. Its function is as follows. Component of the Dot/Icm type IVB secretion system (T4BSS), which is used to inject bacterial effector proteins into eukaryotic host cells. Part of a subcomplex which recruits effector proteins and delivers them to the core transmembrane subcomplex. Forms the interacting surface for recruitment of acidic Glu-rich motif-containing effectors. This Legionella pneumophila subsp. pneumophila (strain Philadelphia 1 / ATCC 33152 / DSM 7513) protein is Type 4 apparatus protein DotM.